The primary structure comprises 185 residues: Elongation factor P (185 aa).

Belongs to the elongation factor P family.

It localises to the cytoplasm. The protein operates within protein biosynthesis; polypeptide chain elongation. Functionally, involved in peptide bond synthesis. Stimulates efficient translation and peptide-bond synthesis on native or reconstituted 70S ribosomes in vitro. Probably functions indirectly by altering the affinity of the ribosome for aminoacyl-tRNA, thus increasing their reactivity as acceptors for peptidyl transferase. The protein is Elongation factor P of Alkaliphilus oremlandii (strain OhILAs) (Clostridium oremlandii (strain OhILAs)).